We begin with the raw amino-acid sequence, 509 residues long: Aspartyl/glutamyl-tRNA(Asn/Gln) amidotransferase subunit B (509 aa).

It belongs to the GatB/GatE family. GatB subfamily. In terms of assembly, heterotrimer of A, B and C subunits.

It carries out the reaction L-glutamyl-tRNA(Gln) + L-glutamine + ATP + H2O = L-glutaminyl-tRNA(Gln) + L-glutamate + ADP + phosphate + H(+). The catalysed reaction is L-aspartyl-tRNA(Asn) + L-glutamine + ATP + H2O = L-asparaginyl-tRNA(Asn) + L-glutamate + ADP + phosphate + 2 H(+). In terms of biological role, allows the formation of correctly charged Asn-tRNA(Asn) or Gln-tRNA(Gln) through the transamidation of misacylated Asp-tRNA(Asn) or Glu-tRNA(Gln) in organisms which lack either or both of asparaginyl-tRNA or glutaminyl-tRNA synthetases. The reaction takes place in the presence of glutamine and ATP through an activated phospho-Asp-tRNA(Asn) or phospho-Glu-tRNA(Gln). This is Aspartyl/glutamyl-tRNA(Asn/Gln) amidotransferase subunit B from Mycobacterium leprae (strain Br4923).